The following is a 133-amino-acid chain: MNRLSCFLLVIGLCIGLSNANLIWNEKNTVFFKSSLGRNNVLKIHCTSEDNLGFHFLRPGETYDFSFHDSIVRSDFYCELWQGPNFKFHASFMAYQGGGLIVHYGKKNFWDAREDGIYFTHGKETPKLEYKWK.

The signal sequence occupies residues 1-20 (MNRLSCFLLVIGLCIGLSNA).

The protein belongs to the plant self-incompatibility (S1) protein family.

The protein resides in the secreted. This chain is S-protein homolog 9, found in Arabidopsis thaliana (Mouse-ear cress).